Here is a 117-residue protein sequence, read N- to C-terminus: uncharacterized protein (117 aa).

The protein resides in the mitochondrion. This is an uncharacterized protein from Arabidopsis thaliana (Mouse-ear cress).